Here is a 195-residue protein sequence, read N- to C-terminus: dTTP/UTP pyrophosphatase (195 aa).

The active-site Proton acceptor is the aspartate 73.

The protein belongs to the Maf family. YhdE subfamily. It depends on a divalent metal cation as a cofactor.

The protein localises to the cytoplasm. The catalysed reaction is dTTP + H2O = dTMP + diphosphate + H(+). It carries out the reaction UTP + H2O = UMP + diphosphate + H(+). Functionally, nucleoside triphosphate pyrophosphatase that hydrolyzes dTTP and UTP. May have a dual role in cell division arrest and in preventing the incorporation of modified nucleotides into cellular nucleic acids. The polypeptide is dTTP/UTP pyrophosphatase (Deinococcus radiodurans (strain ATCC 13939 / DSM 20539 / JCM 16871 / CCUG 27074 / LMG 4051 / NBRC 15346 / NCIMB 9279 / VKM B-1422 / R1)).